The sequence spans 262 residues: E3 ubiquitin-protein ligase NEURL3 (262 aa).

The region spanning 17-173 (ALRFHAEAKG…TTKAIELLDP (157 aa)) is the NHR domain. Residues 202-241 (CAICFYHAANTRLVPCGHTYFCRYCAWRVFSDTAKCPVCR) form an RING-type zinc finger.

As to quaternary structure, (Microbial infection) Interacts with hepatitis C virus protein E1; this interaction prevents E1 interaction with E2 and subsequently inhibits viral infection.

It is found in the cytoplasm. It catalyses the reaction S-ubiquitinyl-[E2 ubiquitin-conjugating enzyme]-L-cysteine + [acceptor protein]-L-lysine = [E2 ubiquitin-conjugating enzyme]-L-cysteine + N(6)-ubiquitinyl-[acceptor protein]-L-lysine.. The protein operates within protein modification; protein ubiquitination. Its function is as follows. E3 ubiquitin-protein ligase that plays a role in various biological processes such as lung development or innate immunity. Seems to utilize UBE2E1. Promotes innate antiviral response by catalyzing 'Lys-63'-linked ubiquitination of IRF7. Also inhibits hepatitis C virus assembly by directly binding to viral E1 envelope glycoprotein to disrupt its interaction with E2. Plays an essential role in TLR4-mediated activation of MAPK pathways by promoting 'Lys-48'-linked polyubiquitination of the phosphatase DUSP1/MKP1. The sequence is that of E3 ubiquitin-protein ligase NEURL3 (NEURL3) from Homo sapiens (Human).